Reading from the N-terminus, the 390-residue chain is MQFRSPLRRFDAFQKTVEDARIKTASGGLITLVSGLIVIFIVLMEWINYRRVIAVHEIIVNPSHGDRMEINFNITFPRIPCQILTVDVLDVSGEFQRDIHHTVSKTRLSPSGEIISVDDLDIGNQQSISDDGAAECGDCYGAADFAPEDTPGCCNTCDAVRDAYGKAHWRIGDVDAFKQCKDENFKELYEAQKVEGCNLAGQLSVNRMAGNFHIAPGRSTQNGNQHVHDTRDYINELDLHDMSHSIHHLSFGPPLDASVHYSNPLDGTVKKVSTADYRYEYFIKCVSYQFMPLSKSTLPIDTNKYAVTQHERSIRGGREEKVPTHVNFHGGIPGVWFQFDISPMRVIERQVRGNTFGGFLSNVLALLGGCVTLASFVDRGYYEVQKLKKN.

Transmembrane regions (helical) follow at residues 27–47 (GGLI…MEWI) and 356–376 (FGGF…LASF).

Belongs to the ERGIC family.

It localises to the membrane. This is an uncharacterized protein from Schizosaccharomyces pombe (strain 972 / ATCC 24843) (Fission yeast).